The following is a 538-amino-acid chain: NADH-quinone oxidoreductase subunit N (538 aa).

The next 14 helical transmembrane spans lie at 12–32 (IAYGALSPMLIMFGVAVVSVL), 47–67 (LALATVGILGAFVAVVALSGS), 81–101 (PTLYLQGLILVASGLALVVMA), 144–164 (GITQTEIFPLTLFAIAGMMLF), 170–190 (LLTMFVALEVFSLPLYVMCAL), 205–225 (YFLLGAFSSAFFLFGSAFVYG), 248–268 (FLLLGVAMLSVGLLFKVGAVP), 294–314 (IAAFGALLRVLYVALPGITTD), 317–337 (PVLWGVAIATMLIGSIGAVTQ), 343–363 (MLAYSAVAHTGFLLTGVAAAN), 371–391 (LFYLAAYGFSTVGAFIIAGLV), 423–443 (APVLGIVFALFLLAFAGIPLT), 472–492 (SAIAAYFYVRVIVVMFFADPV), and 502–522 (GPAVTVSIAVSALITVLLGVA).

This sequence belongs to the complex I subunit 2 family. NDH-1 is composed of 14 different subunits. Subunits NuoA, H, J, K, L, M, N constitute the membrane sector of the complex.

It localises to the cell membrane. The catalysed reaction is a quinone + NADH + 5 H(+)(in) = a quinol + NAD(+) + 4 H(+)(out). Functionally, NDH-1 shuttles electrons from NADH, via FMN and iron-sulfur (Fe-S) centers, to quinones in the respiratory chain. The immediate electron acceptor for the enzyme in this species is believed to be a menaquinone. Couples the redox reaction to proton translocation (for every two electrons transferred, four hydrogen ions are translocated across the cytoplasmic membrane), and thus conserves the redox energy in a proton gradient. This Mycobacteroides abscessus (strain ATCC 19977 / DSM 44196 / CCUG 20993 / CIP 104536 / JCM 13569 / NCTC 13031 / TMC 1543 / L948) (Mycobacterium abscessus) protein is NADH-quinone oxidoreductase subunit N.